The chain runs to 165 residues: Large ribosomal subunit protein uL10 (165 aa).

Belongs to the universal ribosomal protein uL10 family. Part of the ribosomal stalk of the 50S ribosomal subunit. The N-terminus interacts with L11 and the large rRNA to form the base of the stalk. The C-terminus forms an elongated spine to which L12 dimers bind in a sequential fashion forming a multimeric L10(L12)X complex.

Functionally, forms part of the ribosomal stalk, playing a central role in the interaction of the ribosome with GTP-bound translation factors. The polypeptide is Large ribosomal subunit protein uL10 (Cronobacter sakazakii (strain ATCC BAA-894) (Enterobacter sakazakii)).